Reading from the N-terminus, the 309-residue chain is Mitochondrial import receptor subunit TOM34 (309 aa).

A Phosphoserine modification is found at Ser8. TPR repeat units lie at residues 9–42, 51–84, and 85–118; these read VEQL…LQAR, SVLY…VPFS, and IKPL…DNSV. The disordered stretch occupies residues 158–189; it reads WNSLPSDNHKETAKTKSKEATATKSRVPSAGD. A Phosphoserine modification is found at Ser160. A compositionally biased stretch (basic and acidic residues) spans 164 to 178; the sequence is DNHKETAKTKSKEAT. Ser186 bears the Phosphoserine mark. 3 TPR repeats span residues 193–226, 227–260, and 261–294; these read AKAL…SSLE, SATY…DGKN, and VKAF…EPRN. A Glycyl lysine isopeptide (Lys-Gly) (interchain with G-Cter in SUMO2) cross-link involves residue Lys197.

The protein belongs to the Tom34 family. As to quaternary structure, interacts with HSP90A, VCP, ATP6V1D, KIAA0665, AMPK, and DMAP1 through its TPR repeat. Isoform 1 is ubiquitously expressed while isoform 2 is expressed only in mature testicular germ cells. Isoform 1 is expressed in all testicular cells. Isoform 2 is highly expressed in early to late pachytene cells but expression is significantly decreased in round spermatid cells.

Its subcellular location is the cytoplasm. The protein resides in the mitochondrion outer membrane. Plays a role in the import of cytosolically synthesized preproteins into mitochondria. Binds the mature portion of precursor proteins. Interacts with cellular components, and possesses weak ATPase activity. May be a chaperone-like protein that helps to keep newly synthesized precursors in an unfolded import compatible state. This is Mitochondrial import receptor subunit TOM34 (Tomm34) from Mus musculus (Mouse).